A 729-amino-acid chain; its full sequence is Fibroblast growth factor receptor 2 (729 aa).

Residues 1–21 form the signal peptide; that stretch reads MFSWSYLMGLVMVATATLSLA. The Extracellular segment spans residues 22 to 285; the sequence is RPSYNIAEDT…ELDSSSEYTE (264 aa). The segment at 29–62 is disordered; sequence EDTTLEPEDANSSGDDEDDNDGSEDFTNDNNHMR. The span at 31–55 shows a compositional bias: acidic residues; that stretch reads TTLEPEDANSSGDDEDDNDGSEDFT. The N-linked (GlcNAc...) asparagine glycan is linked to N39. Ig-like C2-type domains lie at 64–157 and 166–268; these read PYWT…YHLD and PILQ…AWLT. Positions 71 to 88 are heparin-binding; it reads KLEKKLHAVPAANTVKFR. An intrachain disulfide couples C89 to C141. N-linked (GlcNAc...) asparagine glycans are attached at residues N138, N151, N175, N207, N228, N241, and N256. C188 and C252 form a disulfide bridge. The helical transmembrane segment at 286 to 306 threads the bilayer; the sequence is IAIYCVGGFLITCMIGTIMVC. Residues 307 to 729 are Cytoplasmic-facing; the sequence is HMKGRGKKSD…SQHTNGTIKT (423 aa). Y374 carries the post-translational modification Phosphotyrosine; by autocatalysis. Positions 389–678 constitute a Protein kinase domain; it reads LTLGKPLGEG…LTQTTNEEYL (290 aa). Residues 395 to 403, K425, 473 to 475, and N479 contribute to the ATP site; these read LGEGCFGQV and EYA. Y494 carries the post-translational modification Phosphotyrosine; by autocatalysis. D534 (proton acceptor) is an active-site residue. A phosphotyrosine; by autocatalysis mark is found at Y564, Y565, and Y677. The disordered stretch occupies residues 683-729; it reads PLEQYSPSYPDTRSSCSSGDDSVFSPDAMPYDPCLPKSQHTNGTIKT. A compositionally biased stretch (low complexity) spans 693 to 707; sequence DTRSSCSSGDDSVFS. The span at 720–729 shows a compositional bias: polar residues; the sequence is SQHTNGTIKT.

This sequence belongs to the protein kinase superfamily. Tyr protein kinase family. Fibroblast growth factor receptor subfamily. In terms of assembly, monomer. Homodimer after ligand binding. Post-translationally, autophosphorylated. Binding of FGF family members together with heparan sulfate proteoglycan or heparin promotes receptor dimerization and autophosphorylation on tyrosine residues. Autophosphorylation occurs in trans between the two FGFR molecules present in the dimer. N-glycosylated in the endoplasmic reticulum. The N-glycan chains undergo further maturation to an Endo H-resistant form in the Golgi apparatus. In terms of processing, ubiquitinated. FGFR2 is rapidly ubiquitinated after autophosphorylation, leading to internalization and degradation. Subject to degradation both in lysosomes and by the proteasome.

Its subcellular location is the cell membrane. It localises to the golgi apparatus. The protein localises to the cytoplasmic vesicle. The enzyme catalyses L-tyrosyl-[protein] + ATP = O-phospho-L-tyrosyl-[protein] + ADP + H(+). Present in an inactive conformation in the absence of bound ligand. Ligand binding leads to dimerization and activation by autophosphorylation on tyrosine residues. In terms of biological role, tyrosine-protein kinase that acts as a cell-surface receptor for fibroblast growth factors and plays an essential role in the regulation of cell proliferation, differentiation, migration and apoptosis, and in the regulation of embryonic development. Required for normal embryonic patterning, limb bud development, lung morphogenesis, osteogenesis and skin development. Plays an essential role in the regulation of osteoblast differentiation, proliferation and apoptosis, and is required for normal skeleton development. Promotes cell proliferation in keratinocytes and immature osteoblasts, but promotes apoptosis in differentiated osteoblasts. Phosphorylates PLCG1, FRS2 and PAK4. Ligand binding leads to the activation of several signaling cascades. Activation of PLCG1 leads to the production of the cellular signaling molecules diacylglycerol and inositol 1,4,5-trisphosphate. Phosphorylation of FRS2 triggers recruitment of GRB2, GAB1, PIK3R1 and SOS1, and mediates activation of RAS, MAPK1/ERK2, MAPK3/ERK1 and the MAP kinase signaling pathway, as well as of the AKT1 signaling pathway. FGFR2 signaling is down-regulated by ubiquitination, internalization and degradation. Mutations that lead to constitutive kinase activation or impair normal FGFR2 maturation, internalization and degradation lead to aberrant signaling. Over-expressed FGFR2 promotes activation of STAT1. The protein is Fibroblast growth factor receptor 2 (FGFR2) of Notophthalmus viridescens (Eastern newt).